A 362-amino-acid chain; its full sequence is MELENQLSKLHELKNNLKEMGASLCLASLEKKSAELELKMQEAGFWDDVQKAQEVTQEAKRVKDKIDKFKNLNERIDDVEVLKELMEENDEETAKEIISEVKALSKEIDTLKIETILSGEYDRNDAILTLHTGVGGSDANDWTEMLLRMYTRWCEKKGYSLETIDYLPGDEAGVKSVTLKVKGEFAYGYLKAEKGIHRLVRISPFNANGKRQTSFASVEVLPELTSDQDIEINPVDLRIDTYRAGGAGGQHVNKTESAVRITHIPTGIVVQCQNERSQFSNRDTAMGMLKSKLIELKERAHKEKIEDLTGELKDMGWGSQIRSYVFHPYSMVKDHRTNVETSNVNGVMDGDIDNFIIAYLNS.

Position 250 is an N5-methylglutamine (Gln250).

It belongs to the prokaryotic/mitochondrial release factor family. Post-translationally, methylated by PrmC. Methylation increases the termination efficiency of RF2.

Its subcellular location is the cytoplasm. Its function is as follows. Peptide chain release factor 2 directs the termination of translation in response to the peptide chain termination codons UGA and UAA. The polypeptide is Peptide chain release factor 2 (Clostridium perfringens (strain ATCC 13124 / DSM 756 / JCM 1290 / NCIMB 6125 / NCTC 8237 / Type A)).